The following is a 348-amino-acid chain: Centromere protein N-A (348 aa).

The protein belongs to the CENP-N/CHL4 family.

It is found in the nucleus. It localises to the chromosome. The protein localises to the centromere. Its function is as follows. Probable component of a centromeric complex involved in assembly of kinetochore proteins, mitotic progression and chromosome segregation. The sequence is that of Centromere protein N-A (cenpn-a) from Xenopus laevis (African clawed frog).